The following is a 127-amino-acid chain: ATP synthase epsilon chain (127 aa).

It belongs to the ATPase epsilon chain family. As to quaternary structure, F-type ATPases have 2 components, CF(1) - the catalytic core - and CF(0) - the membrane proton channel. CF(1) has five subunits: alpha(3), beta(3), gamma(1), delta(1), epsilon(1). CF(0) has three main subunits: a, b and c.

The protein localises to the cell inner membrane. Produces ATP from ADP in the presence of a proton gradient across the membrane. The sequence is that of ATP synthase epsilon chain from Leptospira interrogans serogroup Icterohaemorrhagiae serovar copenhageni (strain Fiocruz L1-130).